A 614-amino-acid polypeptide reads, in one-letter code: MIKKASLLTACSVTAFSAWAQDTSPDTLVVTANRFEQPRSTVLAPTTVVTRQDIDRWQSTSVNDVLRRLPGVDITQNGGSGQLSSIFIRGTNASHVLVLIDGVRLNLAGVSGSADLSQFPIALVQSVEYIRGPRSAVYGSDAIGGVVNIITTRDEPGTEISAGWGSNSYQNYDVSTQQQLGDKTRVTLLGDYAHTHGYDVVAYGNTGTQAQPDNDGFLSKTLYGALEHNFTDAWSGFVRGYGYDNRTNYDAYYSPGSPLVDTRKLYSQSWDAGLRYNGELIKSQLITSYSHSKDYNYDPHYGRYDSSATLDEMKQYTVQWANNIIIGHGNVGAGVDWQKQSTALGTAYVKDGYDQRNTGIYLTGLQQVGDFTFEGAARSDDNSQFGRHGTWQTSAGWEFIEGYRFIASYGTSYKAPNLGQLYGFYGNPNLDPEKSKQWEGAFEGLTAGVNWRISGYRNDVSDLIDYDDHTLKYYNEGKARIKGVEATANFDTGPLTHTVSYDYVDARNAITDTPLLRRAKQQVKYQLDWQLYDFDWGITYQYLGTRYDKDYSSYPYQTVKMGGVSLWDLAVAYPVTSHLTVRGKIANLFDKDYETVYGYQTAGREYTLSGSYTF.

Positions M1–A20 are cleaved as a signal peptide. Positions D26 to N33 match the TonB box motif. One can recognise a TBDR plug domain in the interval P38–T152. Residues L83, S85, N92, and V110 to S111 contribute to the cyanocob(III)alamin site. Residues E155–F614 form the TBDR beta-barrel domain. 3 consecutive transmembrane segments (beta stranded) span residues T158–G165, Y169–Q178, and T184–T195. 4 residues coordinate Ca(2+): D199, Q211, D213, and D215. 2 beta stranded membrane passes run F217–E227 and D232–N248. Ca(2+) contacts are provided by Y249 and D250. A cyanocob(III)alamin-binding site is contributed by A251. D261 lines the Ca(2+) pocket. The next 14 beta stranded transmembrane spans lie at R263 to N277, E279 to N296, T309 to I325, H328 to W337, Y353 to G369, F371 to D381, F385 to I400, Y403 to N417, K434 to E443, V449 to N458, Y473 to F490, P494 to A509, R517 to W529, and D535 to D550. T309 contacts cyanocob(III)alamin. R517 is a binding site for cyanocob(III)alamin. Y551 serves as a coordination point for cyanocob(III)alamin. 3 beta stranded membrane-spanning segments follow: residues T558–A572, I585–V596, and A602–F614. Residues Y597 to F614 carry the TonB C-terminal box motif.

It belongs to the TonB-dependent receptor family. BtuB (TC 1.B.14.3.1) subfamily.

Its subcellular location is the cell outer membrane. Its function is as follows. Involved in the active translocation of vitamin B12 (cyanocobalamin) across the outer membrane to the periplasmic space. It derives its energy for transport by interacting with the trans-periplasmic membrane protein TonB. In Shigella dysenteriae serotype 1 (strain Sd197), this protein is Vitamin B12 transporter BtuB.